Reading from the N-terminus, the 39-residue chain is Cytochrome b559 subunit beta (39 aa).

The helical transmembrane segment at 14 to 30 (WLTVHGLAVPTVSFLGS) threads the bilayer. His-18 contributes to the heme binding site.

This sequence belongs to the PsbE/PsbF family. In terms of assembly, heterodimer of an alpha subunit and a beta subunit. PSII is composed of 1 copy each of membrane proteins PsbA, PsbB, PsbC, PsbD, PsbE, PsbF, PsbH, PsbI, PsbJ, PsbK, PsbL, PsbM, PsbT, PsbX, PsbY, PsbZ, Psb30/Ycf12, at least 3 peripheral proteins of the oxygen-evolving complex and a large number of cofactors. It forms dimeric complexes. It depends on heme b as a cofactor.

It localises to the plastid. Its subcellular location is the chloroplast thylakoid membrane. This b-type cytochrome is tightly associated with the reaction center of photosystem II (PSII). PSII is a light-driven water:plastoquinone oxidoreductase that uses light energy to abstract electrons from H(2)O, generating O(2) and a proton gradient subsequently used for ATP formation. It consists of a core antenna complex that captures photons, and an electron transfer chain that converts photonic excitation into a charge separation. The polypeptide is Cytochrome b559 subunit beta (Cucumis sativus (Cucumber)).